The following is a 455-amino-acid chain: Probable ATP-dependent RNA helicase DDX47 (455 aa).

Over residues 1–10 (MAAPEEHDSP) the composition is skewed to basic and acidic residues. A disordered region spans residues 1-20 (MAAPEEHDSPTEASQPIVEE). The residue at position 2 (Ala-2) is an N-acetylalanine. Ser-9 is modified (phosphoserine). A Q motif motif is present at residues 24–52 (KTFKDLGVTDVLCEACDQLGWTKPTKIQI). The Helicase ATP-binding domain occupies 55–226 (IPLALQGRDI…RAALKNPVKC (172 aa)). ATP is bound at residue 68–75 (AETGSGKT). A Phosphothreonine modification is found at Thr-149. The short motif at 174 to 177 (DEAD) is the DEAD box element. The region spanning 237 to 397 (KLQQYYIFIP…GFPTQDDEVM (161 aa)) is the Helicase C-terminal domain. The span at 413-428 (ELREHGEKKKRSREDA) shows a compositional bias: basic and acidic residues. The segment at 413-455 (ELREHGEKKKRSREDAGDNDDTEGAIGVRNKVAGGKMKKRKGR) is disordered. Ser-424 carries the phosphoserine modification.

Belongs to the DEAD box helicase family. DDX47/RRP3 subfamily. As to quaternary structure, interacts with AGO1 and AGO2. Interacts with GABARAP. Interacts with NOL8; the interaction is RNA-dependent. In terms of tissue distribution, expressed in skin, lung and breast. Also expressed in the brain.

Its subcellular location is the nucleus. It localises to the nucleolus. It catalyses the reaction ATP + H2O = ADP + phosphate + H(+). In terms of biological role, required for efficient ribosome biogenesis. May have a role in mRNA splicing. Involved in apoptosis. The chain is Probable ATP-dependent RNA helicase DDX47 (DDX47) from Homo sapiens (Human).